The chain runs to 728 residues: Homoaconitase, mitochondrial (728 aa).

The transit peptide at 1–24 (MVAIPRLARLSVPAWALSARGRFY) directs the protein to the mitochondrion. [4Fe-4S] cluster-binding residues include Cys-362, Cys-422, and Cys-425.

Belongs to the aconitase/IPM isomerase family. The cofactor is [4Fe-4S] cluster.

It is found in the mitochondrion. It catalyses the reaction (2R,3S)-homoisocitrate = cis-homoaconitate + H2O. The protein operates within amino-acid biosynthesis; L-lysine biosynthesis via AAA pathway; L-alpha-aminoadipate from 2-oxoglutarate: step 3/5. Its function is as follows. Catalyzes the reversible hydration of cis-homoaconitate to (2R,3S)-homoisocitrate, a step in the alpha-aminoadipate pathway for lysine biosynthesis. The polypeptide is Homoaconitase, mitochondrial (LYS4) (Cryptococcus neoformans var. neoformans serotype D (strain JEC21 / ATCC MYA-565) (Filobasidiella neoformans)).